The following is a 379-amino-acid chain: 8-amino-7-oxononanoate synthase (379 aa).

2 residues coordinate substrate: Arg27 and Arg34. 114–115 (GY) provides a ligand contact to pyridoxal 5'-phosphate. Position 139 (His139) interacts with substrate. Pyridoxal 5'-phosphate-binding positions include Ser187, 212 to 215 (DDAH), and 232 to 235 (TLSK). Lys235 bears the N6-(pyridoxal phosphate)lysine mark. Thr344 is a substrate binding site.

It belongs to the class-II pyridoxal-phosphate-dependent aminotransferase family. BioF subfamily. In terms of assembly, homodimer. The cofactor is pyridoxal 5'-phosphate.

The enzyme catalyses 6-carboxyhexanoyl-[ACP] + L-alanine + H(+) = (8S)-8-amino-7-oxononanoate + holo-[ACP] + CO2. The protein operates within cofactor biosynthesis; biotin biosynthesis. Functionally, catalyzes the decarboxylative condensation of pimeloyl-[acyl-carrier protein] and L-alanine to produce 8-amino-7-oxononanoate (AON), [acyl-carrier protein], and carbon dioxide. This chain is 8-amino-7-oxononanoate synthase, found in Methylobacterium sp. (strain 4-46).